Here is a 257-residue protein sequence, read N- to C-terminus: 5'-nucleotidase SurE (257 aa).

Residues Asp-9, Asp-10, Ser-42, and Asn-96 each contribute to the a divalent metal cation site.

The protein belongs to the SurE nucleotidase family. A divalent metal cation serves as cofactor.

The protein localises to the cytoplasm. The enzyme catalyses a ribonucleoside 5'-phosphate + H2O = a ribonucleoside + phosphate. Its function is as follows. Nucleotidase that shows phosphatase activity on nucleoside 5'-monophosphates. This Campylobacter lari (strain RM2100 / D67 / ATCC BAA-1060) protein is 5'-nucleotidase SurE.